The primary structure comprises 147 residues: Epididymal secretory protein E3-beta (147 aa).

Positions 1-25 (MASSLKIWGTLLALLCILCTLLVQS) are cleaved as a signal peptide.

As to expression, epididymis.

The protein localises to the secreted. Its function is as follows. Possible function in sperm maturation. The chain is Epididymal secretory protein E3-beta (EDDM3B) from Homo sapiens (Human).